An 853-amino-acid chain; its full sequence is Mitochondrial 15S rRNA processing factor CCM1 (853 aa).

A mitochondrion-targeting transit peptide spans M1–P25. PPR repeat units follow at residues N310–H344 and D347–K381.

It belongs to the CCM1 family. Binds to mitochondrial small subunit 15S rRNA.

Its subcellular location is the mitochondrion. Regulates mitochondrial small subunit maturation by controlling 15S rRNA 5'-end processing. Localizes to the 5' precursor of the 15S rRNA in a position that is subsequently occupied by mS47 in the mature yeast mtSSU. Uses structure and sequence-specific RNA recognition, binding to a single-stranded region of the precursor and specifically recognizing bases -6 to -1. The exchange of Ccm1 for mS47 is coupled to the irreversible removal of precursor rRNA that is accompanied by conformational changes of the mitoribosomal proteins uS5m and mS26. These conformational changes signal completion of 5'-end rRNA processing through protection of the mature 5'-end of the 15S rRNA and stabilization of mS47. The removal of the 5' precursor together with the dissociation of Ccm1 may be catalyzed by the 5'-3' exoribonuclease Pet127. Involved in the specific removal of group I introns in mitochondrial encoded transcripts. In Kluyveromyces lactis (strain ATCC 8585 / CBS 2359 / DSM 70799 / NBRC 1267 / NRRL Y-1140 / WM37) (Yeast), this protein is Mitochondrial 15S rRNA processing factor CCM1 (CCM1).